The following is a 604-amino-acid chain: Numb-like protein (604 aa).

4 disordered regions span residues 1 to 68 (MSRS…QWQA), 223 to 283 (GSFR…PVAA), 372 to 457 (ASAG…TLQP), and 531 to 604 (KAGA…EIEL). Residues 74–225 (RKGTCSFPVR…RTSFAREGSF (152 aa)) form the PID domain. Residues Ser-224 and Ser-228 each carry the phosphoserine modification. Over residues 233–245 (PAEREAGDKKKAE) the composition is skewed to basic and acidic residues. Residues 246–260 (AAAAPAVAPGPAQPG) show a composition bias toward low complexity. Residue Ser-263 is modified to Phosphoserine. Thr-279 carries the phosphothreonine modification. Basic and acidic residues predominate over residues 409-418 (TPSEAERWLE). The residue at position 411 (Ser-411) is a Phosphoserine. Low complexity-rich tracts occupy residues 427–441 (QQQQQQQQQQQQQQQ) and 542–552 (SAPGGQARPRP). The span at 553-568 (NGAPWPPEPAPAPAPE) shows a compositional bias: pro residues.

In terms of assembly, interacts (via PTB domain) with MAP3K7IP2 (via C-terminal). Interacts (via C-terminal) with TRAF6 (via TRAF domains). Associates with EPS15 and NOTCH1. In terms of tissue distribution, preferentially expressed in the nervous system. In the developing neocortex, expressed in postmitotic neurons in the cortical plate but not in progenitors within the ventricular zone.

It localises to the cytoplasm. Plays a role in the process of neurogenesis. Required throughout embryonic neurogenesis to maintain neural progenitor cells, also called radial glial cells (RGCs), by allowing their daughter cells to choose progenitor over neuronal cell fate. Not required for the proliferation of neural progenitor cells before the onset of embryonic neurogenesis. Also required postnatally in the subventricular zone (SVZ) neurogenesis by regulating SVZ neuroblasts survival and ependymal wall integrity. Negative regulator of NF-kappa-B signaling pathway. The inhibition of NF-kappa-B activation is mediated at least in part, by preventing MAP3K7IP2 to interact with polyubiquitin chains of TRAF6 and RIPK1 and by stimulating the 'Lys-48'-linked polyubiquitination and degradation of TRAF6 in cortical neurons. The chain is Numb-like protein (Numbl) from Mus musculus (Mouse).